Consider the following 503-residue polypeptide: Cytochrome P450 11B2, mitochondrial (503 aa).

The transit peptide at 1 to 24 (MALRAKAEVCVAAPWLSLQRARAL) directs the protein to the mitochondrion. A 21-hydroxyprogesterone-binding site is contributed by Phe-381. Cys-450 serves as a coordination point for heme.

The protein belongs to the cytochrome P450 family. Heme is required as a cofactor. As to expression, expressed sporadically in the zona glomerulosa (zG) of the adrenal cortex (conventional zonation), as well as in aldosterone-producing cell clusters (APCCs) composed of morphological zG cells in contact with the capsule (variegated zonation).

It localises to the mitochondrion inner membrane. The catalysed reaction is a steroid + 2 reduced [adrenodoxin] + O2 + 2 H(+) = an 11beta-hydroxysteroid + 2 oxidized [adrenodoxin] + H2O. The enzyme catalyses 21-hydroxyprogesterone + 2 reduced [adrenodoxin] + O2 + 2 H(+) = corticosterone + 2 oxidized [adrenodoxin] + H2O. It carries out the reaction corticosterone + 2 reduced [adrenodoxin] + O2 + 2 H(+) = 18-hydroxycorticosterone + 2 oxidized [adrenodoxin] + H2O. It catalyses the reaction 18-hydroxycorticosterone + 2 reduced [adrenodoxin] + O2 + 2 H(+) = aldosterone + 2 oxidized [adrenodoxin] + 2 H2O. The catalysed reaction is 11-deoxycortisol + 2 reduced [adrenodoxin] + O2 + 2 H(+) = cortisol + 2 oxidized [adrenodoxin] + H2O. The enzyme catalyses 21-hydroxyprogesterone + 2 reduced [adrenodoxin] + O2 + 2 H(+) = 18-hydroxy-11-deoxycorticosterone + 2 oxidized [adrenodoxin] + H2O. It carries out the reaction cortisol + 2 reduced [adrenodoxin] + O2 + 2 H(+) = 18-hydroxycortisol + 2 oxidized [adrenodoxin] + H2O. It catalyses the reaction 18-hydroxycortisol + 2 reduced [adrenodoxin] + O2 + 2 H(+) = 18-oxocortisol + 2 oxidized [adrenodoxin] + 2 H2O. Its pathway is steroid biosynthesis. Its function is as follows. A cytochrome P450 monooxygenase that catalyzes the biosynthesis of aldosterone, the main mineralocorticoid in the human body responsible for salt and water homeostasis, thus involved in blood pressure regulation, arterial hypertension, and the development of heart failure. Catalyzes three sequential oxidative reactions of 11-deoxycorticosterone (21-hydroxyprogesterone), namely 11-beta hydroxylation, followed by two successive oxidations at C18 yielding 18-hydroxy and then 18-oxo intermediates (that would not leave the enzyme active site during the consecutive hydroxylation reactions), ending with the formation of aldosterone. Can also produce 18-hydroxycortisol and 18-oxocortisol, derived from successive oxidations of cortisol at C18, normally found at very low levels, but significantly increased in primary aldosteronism, the most common form of secondary hypertension. Mechanistically, uses molecular oxygen inserting one oxygen atom into a substrate and reducing the second into a water molecule. Two electrons are provided by NADPH via a two-protein mitochondrial transfer system comprising flavoprotein FDXR (adrenodoxin/ferredoxin reductase) and nonheme iron-sulfur protein FDX1 or FDX2 (adrenodoxin/ferredoxin). Could also be involved in the androgen metabolic pathway. The chain is Cytochrome P450 11B2, mitochondrial from Homo sapiens (Human).